We begin with the raw amino-acid sequence, 1291 residues long: Period circadian protein homolog 1 (1291 aa).

A disordered region spans residues 1–134 (MSGPLEGADG…SSEQSARART (134 aa)). Positions 1-151 (MSGPLEGADG…LRELKLRLPP (151 aa)) are interaction with BTRC. Low complexity predominate over residues 48 to 115 (NSNGSSGNES…AYSLLSASSE (68 aa)). The span at 116–132 (QDNPSTSGCSSEQSARA) shows a compositional bias: polar residues. Position 121 is a phosphothreonine; by CSNK1E (T121). Residues S122 and S126 each carry the phosphoserine; by CSNK1E modification. Positions 138 to 147 (LMTALRELKL) match the Nuclear export signal 1 motif. PAS domains follow at residues 208-275 (ITSE…PSRL) and 348-414 (YEAP…KILQ). In terms of domain architecture, PAC spans 422-465 (HSPIRFCARNGEYVTMDTSWAGFVHPWSRKVAFVLGRHKVRTAP). A Nuclear export signal 2 motif is present at residues 489–498 (LSEQIHRLLL). Disordered regions lie at residues 508 to 544 (GLCGVGPLMSPGPLHSPGSSSDSNGGDAEGPGPPAPV) and 647 to 698 (TKRK…KEPV). Low complexity-rich tracts occupy residues 513–533 (GPLMSPGPLHSPGSSSDSNGG) and 652–662 (ASSSSYTASSA). Residues 596-815 (ELEVAPVPDQ…GLDTSSVAPS (220 aa)) are required for phosphorylation by CSNK1E. S661, S663, and S704 each carry phosphoserine. Disordered regions lie at residues 749-772 (GLAPGPAPSPAPSPTVAPDPTPDA), 809-873 (TSSV…PPAT), and 938-1037 (SQAP…ALSG). Pro residues predominate over residues 751–769 (APGPAPSPAPSPTVAPDPT). Phosphoserine is present on S815. Positions 824 to 840 (IPPGRRHHCRSKAKRSR) match the Nuclear localization signal motif. The segment covering 827-846 (GRRHHCRSKAKRSRHHHHQT) has biased composition (basic residues). Pro residues-rich tracts occupy residues 859–873 (SPVPSSGPWPPPPAT) and 955–965 (PSLPPPPLSPP). The span at 973–985 (FNSRCSSPLQLNL) shows a compositional bias: polar residues. 2 positions are modified to phosphoserine: S978 and S979. The short motif at 981 to 988 (LQLNLLQL) is the Nuclear export signal 3 element. An LXXLL motif is present at residues 1042–1046 (LELLL). A compositionally biased stretch (low complexity) spans 1051–1061 (RSGTGSAASGS). Disordered regions lie at residues 1051 to 1099 (RSGT…YFGS) and 1207 to 1291 (SVQD…NSTS). Residues 1062-1076 (LGSGLGSGSGSGSHE) show a composition bias toward gly residues. Residues 1077 to 1094 (GGSTSASITRSSQSSHTS) show a composition bias toward low complexity. Residues 1148–1291 (SRDAASVLKQ…ALPAEENSTS (144 aa)) form a CRY binding domain region. The span at 1235–1248 (GEGGGCGVGGGGGD) shows a compositional bias: gly residues. Over residues 1253–1267 (AQTQIGAKGSSSQDS) the composition is skewed to polar residues.

In terms of assembly, homodimer. Component of the circadian core oscillator, which includes the CRY proteins, CLOCK or NPAS2, BMAL1 or BMAL2, CSNK1D and/or CSNK1E, TIMELESS, and the PER proteins. Interacts directly with TIMELESS. Interacts directly with PER2, PER3, CRY1 and CRY2. Interacts with BMAL1 and CLOCK. Interacts with GPRASP1. Interacts (phosphorylated) with BTRC and FBXW11; the interactions trigger proteasomal degradation. Interacts with NONO and SFPQ. Interacts with WDR5. Interacts with U2AF1L4 (Isoform 3). Interacts with USP2. Interacts with HNF4A. Post-translationally, phosphorylated on serine residues by CSNK1D, CSNK1E and probably also by CSNK1G2. Phosphorylation by CSNK1D or CSNK1E promotes nuclear location of PER proteins as well as ubiquitination and subsequent degradation. May be dephosphorylated by PP1. In terms of processing, ubiquitinated; requires phosphorylation by CSNK1E and interaction with BTRC and FBXW11. Deubiquitinated by USP2. In brain, highest expression is observed in the SCN. Highly expressed in the pyramidal cell layer of the piriform cortex, the periventricular part of the caudate-putamen, many thalamic nuclei, and the granular layer of the cerebellar cortex. Weaker expression is detected in most area of the brain, including cortical and non cortical structures. Expression but no oscillations occurs in the glomerular and mitral cell layers of the olfactory bulb, the internal granular layer of the cerebellum, the cornu ammonis and dentate gyrus of the hippocampus, the cerebral and piriform cortices. Expressed in the renal cortex (at protein level). Also found in heart, brain, bladder, lumbar spinal cord, spleen, lung, liver, skeletal muscle and testis.

It localises to the nucleus. The protein resides in the cytoplasm. In terms of biological role, transcriptional repressor which forms a core component of the circadian clock. The circadian clock, an internal time-keeping system, regulates various physiological processes through the generation of approximately 24 hour circadian rhythms in gene expression, which are translated into rhythms in metabolism and behavior. It is derived from the Latin roots 'circa' (about) and 'diem' (day) and acts as an important regulator of a wide array of physiological functions including metabolism, sleep, body temperature, blood pressure, endocrine, immune, cardiovascular, and renal function. Consists of two major components: the central clock, residing in the suprachiasmatic nucleus (SCN) of the brain, and the peripheral clocks that are present in nearly every tissue and organ system. Both the central and peripheral clocks can be reset by environmental cues, also known as Zeitgebers (German for 'timegivers'). The predominant Zeitgeber for the central clock is light, which is sensed by retina and signals directly to the SCN. The central clock entrains the peripheral clocks through neuronal and hormonal signals, body temperature and feeding-related cues, aligning all clocks with the external light/dark cycle. Circadian rhythms allow an organism to achieve temporal homeostasis with its environment at the molecular level by regulating gene expression to create a peak of protein expression once every 24 hours to control when a particular physiological process is most active with respect to the solar day. Transcription and translation of core clock components (CLOCK, NPAS2, BMAL1, BMAL2, PER1, PER2, PER3, CRY1 and CRY2) plays a critical role in rhythm generation, whereas delays imposed by post-translational modifications (PTMs) are important for determining the period (tau) of the rhythms (tau refers to the period of a rhythm and is the length, in time, of one complete cycle). A diurnal rhythm is synchronized with the day/night cycle, while the ultradian and infradian rhythms have a period shorter and longer than 24 hours, respectively. Disruptions in the circadian rhythms contribute to the pathology of cardiovascular diseases, cancer, metabolic syndromes and aging. A transcription/translation feedback loop (TTFL) forms the core of the molecular circadian clock mechanism. Transcription factors, CLOCK or NPAS2 and BMAL1 or BMAL2, form the positive limb of the feedback loop, act in the form of a heterodimer and activate the transcription of core clock genes and clock-controlled genes (involved in key metabolic processes), harboring E-box elements (5'-CACGTG-3') within their promoters. The core clock genes: PER1/2/3 and CRY1/2 which are transcriptional repressors form the negative limb of the feedback loop and interact with the CLOCK|NPAS2-BMAL1|BMAL2 heterodimer inhibiting its activity and thereby negatively regulating their own expression. This heterodimer also activates nuclear receptors NR1D1/2 and RORA/B/G, which form a second feedback loop and which activate and repress BMAL1 transcription, respectively. Regulates circadian target genes expression at post-transcriptional levels, but may not be required for the repression at transcriptional level. Controls PER2 protein decay. Represses CRY2 preventing its repression on CLOCK/BMAL1 target genes such as FXYD5 and SCNN1A in kidney and PPARA in liver. Besides its involvement in the maintenance of the circadian clock, has an important function in the regulation of several processes. Participates in the repression of glucocorticoid receptor NR3C1/GR-induced transcriptional activity by reducing the association of NR3C1/GR to glucocorticoid response elements (GREs) by BMAL1:CLOCK. Plays a role in the modulation of the neuroinflammatory state via the regulation of inflammatory mediators release, such as CCL2 and IL6. In spinal astrocytes, negatively regulates the MAPK14/p38 and MAPK8/JNK MAPK cascades as well as the subsequent activation of NFkappaB. Coordinately regulates the expression of multiple genes that are involved in the regulation of renal sodium reabsorption. Can act as gene expression activator in a gene and tissue specific manner, in kidney enhances WNK1 and SLC12A3 expression in collaboration with CLOCK. Modulates hair follicle cycling. Represses the CLOCK-BMAL1 induced transcription of BHLHE40/DEC1. In Mus musculus (Mouse), this protein is Period circadian protein homolog 1 (Per1).